A 154-amino-acid chain; its full sequence is Transcriptional repressor NrdR (154 aa).

Residues 1–22 form a disordered region; the sequence is MECPNCHKNASRVIDSRPSDEN. The segment at 3–34 is a zinc-finger region; that stretch reads CPNCHKNASRVIDSRPSDENRAIRRRRECENC. An ATP-cone domain is found at 49–139; it reads LLVVKNDGTR…IYRQFKDVSG (91 aa).

It belongs to the NrdR family. The cofactor is Zn(2+).

Functionally, negatively regulates transcription of bacterial ribonucleotide reductase nrd genes and operons by binding to NrdR-boxes. The chain is Transcriptional repressor NrdR from Lactobacillus johnsonii (strain CNCM I-12250 / La1 / NCC 533).